A 508-amino-acid polypeptide reads, in one-letter code: Serine carboxypeptidase 3 (508 aa).

Positions 1–19 (MVTTPRLVSLLLLLALCAA) are cleaved as a signal peptide. Positions 20–80 (AAGALRLPPD…PGQLLERRVT (61 aa)) are excised as a propeptide. Residues 48-67 (PKDSSSSSGRHGARVGEGNE) form a disordered region. Leucine 81 bears the Blocked amino end (Leu) mark. Disulfide bonds link cysteine 133–cysteine 373, cysteine 301–cysteine 316, and cysteine 339–cysteine 344. N-linked (GlcNAc...) asparagine glycosylation occurs at asparagine 151. The active site involves serine 223. Residue aspartate 411 is part of the active site. A substrate-binding site is contributed by cysteine 414. Histidine 468 is a catalytic residue. A propeptide spanning residues 492–508 (EAVPEEESSTTSFYAAM) is cleaved from the precursor.

It belongs to the peptidase S10 family. Monomer.

It localises to the secreted. It carries out the reaction Release of a C-terminal amino acid with broad specificity.. Inhibited by mercuric ions. This is Serine carboxypeptidase 3 (CBP3) from Hordeum vulgare (Barley).